The chain runs to 655 residues: p-hydroxybenzoic acid efflux pump subunit AaeB (655 aa).

Residues 1 to 12 are Periplasmic-facing; that stretch reads MGIFSIANQHIR. Residues 13-33 traverse the membrane as a helical segment; the sequence is FAVKLATAIVLALFVGFHFQL. Residues 34–37 are Cytoplasmic-facing; that stretch reads ETPR. The helical transmembrane segment at 38 to 58 threads the bilayer; sequence WAVLTAAIVAAGPAFAAGGEP. Residues 59-68 are Periplasmic-facing; sequence YSGAIRYRGF. A helical transmembrane segment spans residues 69 to 89; it reads LRIIGTFIGCIAGLVIIIAMI. Topologically, residues 90–92 are cytoplasmic; it reads RAP. The chain crosses the membrane as a helical span at residues 93 to 113; the sequence is LLMILVCCIWAGFCTWISSLV. The Periplasmic portion of the chain corresponds to 114–120; the sequence is RIENSYA. Residues 121 to 141 form a helical membrane-spanning segment; that stretch reads WGLAGYTALIIVITIQPEPLL. The Cytoplasmic segment spans residues 142–151; it reads TPQFAVERCS. The chain crosses the membrane as a helical span at residues 152–172; that stretch reads EIVIGIVCAIMADLLFSPRSI. Residues 173–369 lie on the Periplasmic side of the membrane; that stretch reads KQEVDRELES…RTTLSCILGT (197 aa). The helical transmembrane segment at 370–390 threads the bilayer; sequence LFWLWTGWTSGSGAMVMIAVV. Topologically, residues 391–406 are cytoplasmic; the sequence is TSLAMRLPNPRMVAID. Residues 407-427 traverse the membrane as a helical segment; the sequence is FIYGTLAALPLGLLYFLVIIP. Topologically, residues 428–430 are periplasmic; the sequence is NTQ. The chain crosses the membrane as a helical span at residues 431-451; that stretch reads QSMLLLCISLAVLGFFLGIEV. Residues 452–458 lie on the Cytoplasmic side of the membrane; sequence QKRRLGS. Residues 459-479 traverse the membrane as a helical segment; it reads MGALASTINIIVLDNPMTFHF. Over 480 to 481 the chain is Periplasmic; the sequence is SQ. A helical transmembrane segment spans residues 482 to 502; the sequence is FLDSALGQIVGCVLAFTVILL. Residues 503 to 655 lie on the Cytoplasmic side of the membrane; sequence VRDKSRDRTG…HKYQHALTDS (153 aa).

The protein belongs to the aromatic acid exporter ArAE (TC 2.A.85) family.

Its subcellular location is the cell inner membrane. Forms an efflux pump with AaeA. Could function as a metabolic relief valve, allowing to eliminate certain compounds when they accumulate to high levels in the cell. In Shigella flexneri, this protein is p-hydroxybenzoic acid efflux pump subunit AaeB.